A 130-amino-acid chain; its full sequence is Large ribosomal subunit protein bL12 (130 aa).

This sequence belongs to the bacterial ribosomal protein bL12 family. Homodimer. Part of the ribosomal stalk of the 50S ribosomal subunit. Forms a multimeric L10(L12)X complex, where L10 forms an elongated spine to which 2 to 4 L12 dimers bind in a sequential fashion. Binds GTP-bound translation factors.

In terms of biological role, forms part of the ribosomal stalk which helps the ribosome interact with GTP-bound translation factors. Is thus essential for accurate translation. The polypeptide is Large ribosomal subunit protein bL12 (Chlamydia muridarum (strain MoPn / Nigg)).